Reading from the N-terminus, the 312-residue chain is Methionyl-tRNA formyltransferase (312 aa).

The interval 34 to 54 is disordered; it reads PDAASGRRGKPQPSPVAREAA. 110–113 contributes to the (6S)-5,6,7,8-tetrahydrofolate binding site; that stretch reads SLLP.

Belongs to the Fmt family.

It catalyses the reaction L-methionyl-tRNA(fMet) + (6R)-10-formyltetrahydrofolate = N-formyl-L-methionyl-tRNA(fMet) + (6S)-5,6,7,8-tetrahydrofolate + H(+). In terms of biological role, attaches a formyl group to the free amino group of methionyl-tRNA(fMet). The formyl group appears to play a dual role in the initiator identity of N-formylmethionyl-tRNA by promoting its recognition by IF2 and preventing the misappropriation of this tRNA by the elongation apparatus. The protein is Methionyl-tRNA formyltransferase of Mycobacterium tuberculosis (strain ATCC 25177 / H37Ra).